The sequence spans 380 residues: Queuine tRNA-ribosyltransferase (380 aa).

Aspartate 96 (proton acceptor) is an active-site residue. Residues aspartate 96 to phenylalanine 100, aspartate 150, glutamine 193, and glycine 220 contribute to the substrate site. The segment at glycine 251 to serine 257 is RNA binding. The active-site Nucleophile is aspartate 270. An RNA binding; important for wobble base 34 recognition region spans residues threonine 275 to arginine 279. Zn(2+) is bound by residues cysteine 308, cysteine 310, cysteine 313, and histidine 339.

It belongs to the queuine tRNA-ribosyltransferase family. Homodimer. Within each dimer, one monomer is responsible for RNA recognition and catalysis, while the other monomer binds to the replacement base PreQ1. Zn(2+) is required as a cofactor.

The catalysed reaction is 7-aminomethyl-7-carbaguanine + guanosine(34) in tRNA = 7-aminomethyl-7-carbaguanosine(34) in tRNA + guanine. Its pathway is tRNA modification; tRNA-queuosine biosynthesis. Its function is as follows. Catalyzes the base-exchange of a guanine (G) residue with the queuine precursor 7-aminomethyl-7-deazaguanine (PreQ1) at position 34 (anticodon wobble position) in tRNAs with GU(N) anticodons (tRNA-Asp, -Asn, -His and -Tyr). Catalysis occurs through a double-displacement mechanism. The nucleophile active site attacks the C1' of nucleotide 34 to detach the guanine base from the RNA, forming a covalent enzyme-RNA intermediate. The proton acceptor active site deprotonates the incoming PreQ1, allowing a nucleophilic attack on the C1' of the ribose to form the product. After dissociation, two additional enzymatic reactions on the tRNA convert PreQ1 to queuine (Q), resulting in the hypermodified nucleoside queuosine (7-(((4,5-cis-dihydroxy-2-cyclopenten-1-yl)amino)methyl)-7-deazaguanosine). The sequence is that of Queuine tRNA-ribosyltransferase from Streptococcus thermophilus (strain CNRZ 1066).